A 137-amino-acid polypeptide reads, in one-letter code: Large ribosomal subunit protein uL16 (137 aa).

It belongs to the universal ribosomal protein uL16 family. As to quaternary structure, part of the 50S ribosomal subunit.

Its function is as follows. Binds 23S rRNA and is also seen to make contacts with the A and possibly P site tRNAs. This Streptococcus agalactiae serotype Ia (strain ATCC 27591 / A909 / CDC SS700) protein is Large ribosomal subunit protein uL16.